Consider the following 2210-residue polypeptide: Genome polyprotein (2210 aa).

The disordered stretch occupies residues 1 to 24 (MAPVVSRDQCKPKTPKPHRPAPPH). Residues 13 to 22 (KTPKPHRPAP) are compositionally biased toward basic residues. An SF3 helicase domain is found at 426 to 585 (SNKIVELSTM…ADFLRQHPGV (160 aa)). 456–463 (GPPGHGKS) serves as a coordination point for ATP. Tyr-940 is subject to O-(5'-phospho-RNA)-tyrosine. Positions 991-1136 (GNNCDDIPLH…KVITPITPEP (146 aa)) constitute a Peptidase C24 domain. Residues His-1025, Asp-1039, and Cys-1103 each act as for 3CLpro activity in the active site. The 123-residue stretch at 1379-1501 (DHCLELDYSK…TIPSHLTKSI (123 aa)) folds into the RdRp catalytic domain. Residues 1656 to 1685 (LIREGNMSDNKSIPEQQHESSRAMDAGATG) are disordered.

Specific enzymatic cleavages by its own cysteine protease yield mature proteins. The protease cleaves itself from the nascent polyprotein autocatalytically. Precursor p41 can be cleaved by viral 3CLpro into protein p19 and VPg, or cleaved by host protease into protein p23/2 and protein p18. Post-translationally, VPg is uridylylated by the polymerase and is covalently attached to the 5'-end of the polyadenylated genomic and subgenomic RNAs. This uridylylated form acts as a nucleotide-peptide primer for the polymerase.

It localises to the virion. It is found in the host cytoplasm. The enzyme catalyses a ribonucleoside 5'-triphosphate + H2O = a ribonucleoside 5'-diphosphate + phosphate + H(+). It carries out the reaction Endopeptidase with a preference for cleavage when the P1 position is occupied by Glu-|-Xaa and the P1' position is occupied by Gly-|-Yaa.. It catalyses the reaction RNA(n) + a ribonucleoside 5'-triphosphate = RNA(n+1) + diphosphate. Displays NTPase activity, but no helicase activity. Induces the formation of convoluted membranes derived from the host ER. These remodeled membranes probably form the viral factories that contain the replication complex. Together with NS2 and NS4, initiates the formation of the replication complex. Its function is as follows. Viral genome-linked protein is covalently linked to the 5'-end of the positive-strand, negative-strand genomic RNAs and subgenomic RNA. Acts as a genome-linked replication primer. May recruit ribosome to viral RNA thereby promoting viral proteins translation. Interacts with host translation initiation complex to allow the translation of viral proteins. In terms of biological role, processes the polyprotein. 3CLpro-RdRp is first released by autocleavage, then all other proteins are cleaved. May cleave polyadenylate-binding protein thereby inhibiting cellular translation. Functionally, replicates genomic and antigenomic RNA by recognizing replications specific signals. Also transcribes a subgenomic mRNA by initiating RNA synthesis internally on antigenomic RNA. This sgRNA codes for structural proteins. Catalyzes the covalent attachment VPg with viral RNAs. Capsid protein self assembles to form an icosahedral capsid with a T=3 symmetry, about 35 nm in diameter, and consisting of 180 capsid proteins. A smaller form of capsid with a diameter of 23 nm might be capsid proteins assembled as icosahedron with T=1 symmetry. The capsid encapsulate VP2 proteins and genomic or subgenomic RNA. Attaches virion to target cells by binding histo-blood group antigens, inducing endocytosis of the viral particle. Acidification of the endosome induces conformational change of capsid protein thereby injecting virus genomic RNA into host cytoplasm. The polypeptide is Genome polyprotein (Bovine enteric calicivirus NB (isolate Bovine/United States/N ebraska/1980) (BEC-NB)).